Reading from the N-terminus, the 475-residue chain is Aspartate ammonia-lyase (475 aa).

Residues Thr104, Ser143, Thr144, Asn145, Thr190, and His191 each contribute to the L-aspartate site. Positions 320–329 are SS loop; it reads GSSIMPGKVN. The active-site Proton acceptor is the Ser321. Positions 322 and 327 each coordinate L-aspartate.

It belongs to the class-II fumarase/aspartase family. Aspartase subfamily. In terms of assembly, homotetramer.

It catalyses the reaction L-aspartate = fumarate + NH4(+). In terms of biological role, catalyzes the reversible conversion of L-aspartate to fumarate and ammonia. The polypeptide is Aspartate ammonia-lyase (Bacillus subtilis (strain 168)).